A 508-amino-acid polypeptide reads, in one-letter code: UTP--glucose-1-phosphate uridylyltransferase (508 aa).

Phosphoserine is present on S13. UTP-binding positions include 113–116 (LNGG), K127, Q190, and G222. Substrate is bound at residue 115–116 (GG). K127 is a Mg(2+) binding site. Substrate is bound by residues H223 and 251 to 253 (NID). 2 residues coordinate UTP: D253 and K396. A Mg(2+)-binding site is contributed by D253. K396 is a catalytic residue. Position 426 is a phosphothreonine (T426). S434 is modified (phosphoserine). K438 carries the N6-acetyllysine modification. Residues S448 and S461 each carry the phosphoserine modification. Residues 457 to 508 (HLTVSGDVTFGKNVSLKGTVIIIANHGDRIDIPPGAVLENKIVSGNLRILDH) form an oligomerization region. Residues 502 to 503 (NL) are critical for end-to-end subunit interaction.

Belongs to the UDPGP type 1 family. In terms of assembly, homooctamer.

The protein resides in the cytoplasm. It catalyses the reaction alpha-D-glucose 1-phosphate + UTP + H(+) = UDP-alpha-D-glucose + diphosphate. Its pathway is glycan biosynthesis; glycogen biosynthesis. Its function is as follows. UTP--glucose-1-phosphate uridylyltransferase catalyzing the conversion of glucose-1-phosphate into UDP-glucose, a crucial precursor for the production of glycogen. The polypeptide is UTP--glucose-1-phosphate uridylyltransferase (UGP2) (Cricetulus griseus (Chinese hamster)).